We begin with the raw amino-acid sequence, 315 residues long: Protein-methionine-sulfoxide reductase catalytic subunit MsrP (315 aa).

Positions 1 to 45 (MPSYRPPKIASSEITPRQVYLRRREFLGAATLGAMALYGAGKASA) form a signal peptide, tat-type signal. Mo-molybdopterin contacts are provided by residues Asn71, 74–75 (YE), Cys129, Thr164, Asn214, Arg219, and 230–232 (GIK).

This sequence belongs to the MsrP family. Heterodimer of a catalytic subunit (MsrP) and a heme-binding subunit (MsrQ). Mo-molybdopterin serves as cofactor. Predicted to be exported by the Tat system. The position of the signal peptide cleavage has not been experimentally proven.

It is found in the periplasm. The catalysed reaction is L-methionyl-[protein] + a quinone + H2O = L-methionyl-(S)-S-oxide-[protein] + a quinol. The enzyme catalyses L-methionyl-[protein] + a quinone + H2O = L-methionyl-(R)-S-oxide-[protein] + a quinol. Part of the MsrPQ system that repairs oxidized periplasmic proteins containing methionine sulfoxide residues (Met-O), using respiratory chain electrons. Thus protects these proteins from oxidative-stress damage caused by reactive species of oxygen and chlorine generated by the host defense mechanisms. MsrPQ is essential for the maintenance of envelope integrity under bleach stress, rescuing a wide series of structurally unrelated periplasmic proteins from methionine oxidation. The catalytic subunit MsrP is non-stereospecific, being able to reduce both (R-) and (S-) diastereoisomers of methionine sulfoxide. The polypeptide is Protein-methionine-sulfoxide reductase catalytic subunit MsrP (Rhizobium etli (strain ATCC 51251 / DSM 11541 / JCM 21823 / NBRC 15573 / CFN 42)).